The following is a 402-amino-acid chain: Formate-dependent phosphoribosylglycinamide formyltransferase (402 aa).

Residues 23-24 (EL) and Glu-83 contribute to the N(1)-(5-phospho-beta-D-ribosyl)glycinamide site. ATP-binding positions include Arg-116, Lys-157, 162 to 167 (SSGKGQ), 197 to 200 (ESQI), and Glu-205. Residues 121 to 316 (RLAAEELGLP…EFELHARAIL (196 aa)) form the ATP-grasp domain. Positions 275 and 287 each coordinate Mg(2+). N(1)-(5-phospho-beta-D-ribosyl)glycinamide-binding positions include Asp-294, Lys-363, and 370 to 371 (RR).

This sequence belongs to the PurK/PurT family. As to quaternary structure, homodimer.

It catalyses the reaction N(1)-(5-phospho-beta-D-ribosyl)glycinamide + formate + ATP = N(2)-formyl-N(1)-(5-phospho-beta-D-ribosyl)glycinamide + ADP + phosphate + H(+). It functions in the pathway purine metabolism; IMP biosynthesis via de novo pathway; N(2)-formyl-N(1)-(5-phospho-D-ribosyl)glycinamide from N(1)-(5-phospho-D-ribosyl)glycinamide (formate route): step 1/1. Its function is as follows. Involved in the de novo purine biosynthesis. Catalyzes the transfer of formate to 5-phospho-ribosyl-glycinamide (GAR), producing 5-phospho-ribosyl-N-formylglycinamide (FGAR). Formate is provided by PurU via hydrolysis of 10-formyl-tetrahydrofolate. This is Formate-dependent phosphoribosylglycinamide formyltransferase from Acinetobacter baumannii (strain ATCC 17978 / DSM 105126 / CIP 53.77 / LMG 1025 / NCDC KC755 / 5377).